The chain runs to 237 residues: Arginine-binding periplasmic protein (237 aa).

Positions 1 to 18 (MKKTLLTLLFGCVVTAQA) are cleaved as a signal peptide.

The protein belongs to the bacterial solute-binding protein 3 family.

The protein resides in the periplasm. Functionally, binds arginine; part of the arginine periplasmic transport system. In Mannheimia haemolytica (Pasteurella haemolytica), this protein is Arginine-binding periplasmic protein (lapT).